Reading from the N-terminus, the 396-residue chain is MSKEKFTRNKPHVNIGTIGHVDHGKTTLTAAITTTLAASGKAQAMAYDQIDKSPEEKARGITISTTHVEYETDNRHYAHVDCPGHADYVKNMITGAAQMDGAILVVSSADGPMPQTREHILLARQVGVPALVVFMNKVDMVDDKELLELVELEVRELLSKYEFPGDDIPVVKGSALKALEGDTSEIGRPAIMKLMEACDTYIPAPVRAVDKTFLMPVEDVFSISGRGTVVTGRVERGIVKVGDEIEIVGIRPTQKTTVTGIEMFRKLLDEGQAGDNCGVLLRGTKKEDVERGQVLVKPGTVKPHKKFKAEAYILTKEEGGRHTPFFNGYRPQFYFRTTDVTGVCTLKAGTEMVMPGDKIEVSVELIAPIAMEKELRFAIREGGRTVGAGVVTEILE.

A tr-type G domain is found at 10–206; that stretch reads KPHVNIGTIG…ACDTYIPAPV (197 aa). The tract at residues 19-26 is G1; it reads GHVDHGKT. GTP is bound at residue 19–26; the sequence is GHVDHGKT. Residue Thr26 participates in Mg(2+) binding. The segment at 60–64 is G2; it reads GITIS. Residues 81-84 form a G3 region; the sequence is DCPG. GTP-binding positions include 81 to 85 and 136 to 139; these read DCPGH and NKVD. The G4 stretch occupies residues 136–139; the sequence is NKVD. The segment at 174-176 is G5; sequence SAL.

It belongs to the TRAFAC class translation factor GTPase superfamily. Classic translation factor GTPase family. EF-Tu/EF-1A subfamily. Monomer.

The protein localises to the cytoplasm. The enzyme catalyses GTP + H2O = GDP + phosphate + H(+). Functionally, GTP hydrolase that promotes the GTP-dependent binding of aminoacyl-tRNA to the A-site of ribosomes during protein biosynthesis. The protein is Elongation factor Tu of Bdellovibrio bacteriovorus (strain ATCC 15356 / DSM 50701 / NCIMB 9529 / HD100).